Reading from the N-terminus, the 381-residue chain is Arf-GAP with dual PH domain-containing protein 2 (381 aa).

The region spanning 9–131 is the Arf-GAP domain; that stretch reads KRLLELLRAP…FMADGETISL (123 aa). The C4-type zinc finger occupies 25–48; that stretch reads CADCGAADPDWASYKLGIFICLNC. PH domains are found at residues 132-233 and 255-361; these read PGNR…AARL and NYLK…GVLS.

In terms of tissue distribution, highly expressed in placenta, spleen, kidney, skeletal muscle and adrenal gland. Weakly expressed in thyroid, liver, heart, lung, small intestine, peripheral blood leukocytes. Not detected in spinal cord, brain, stomach, trachea, colon, lymph node and bone marrow.

The protein localises to the cytoplasm. It is found in the cell membrane. GTPase-activating protein for the ADP ribosylation factor family (Potential). Binds phosphatidylinositol 3,4,5-trisphosphate (PtdInsP3) and inositol 1,3,4,5-tetrakisphosphate (InsP4). Possesses a stoichiometry of two binding sites for InsP4 with identical affinity. The protein is Arf-GAP with dual PH domain-containing protein 2 (ADAP2) of Homo sapiens (Human).